Reading from the N-terminus, the 156-residue chain is MSRRNKSKKRLIQKDPVHESKLVSMLTARILKSGKKGLAYKIVYEALDIINKKTSHDSLEILEKAIRNATPLVEVKSRRIGGSTYQVPMEVRAYRGTNLALRWITMFAHTRSGRSMAFRLANEIIDASNESGNTIRKREETHRMAEANKAFAHYRY.

Belongs to the universal ribosomal protein uS7 family. Part of the 30S ribosomal subunit.

Its subcellular location is the plastid. The protein localises to the chloroplast. One of the primary rRNA binding proteins, it binds directly to 16S rRNA where it nucleates assembly of the head domain of the 30S subunit. This chain is Small ribosomal subunit protein uS7c (rps7), found in Gracilaria tenuistipitata var. liui (Red alga).